Reading from the N-terminus, the 126-residue chain is 14 kDa phosphohistidine phosphatase (126 aa).

Lys22 provides a ligand contact to substrate. The active-site Proton acceptor is the His54. Residue 95 to 97 (SMG) participates in substrate binding.

The protein belongs to the janus family. In terms of assembly, monomer.

The protein localises to the cytoplasm. The enzyme catalyses N(pros)-phospho-L-histidyl-[protein] + H2O = L-histidyl-[protein] + phosphate. It carries out the reaction N(tele)-phospho-L-histidyl-[protein] + H2O = L-histidyl-[protein] + phosphate. In terms of biological role, exhibits phosphohistidine phosphatase activity. This Sus scrofa (Pig) protein is 14 kDa phosphohistidine phosphatase (PHPT1).